Consider the following 516-residue polypeptide: Lysine--tRNA ligase (516 aa).

The tract at residues 1 to 23 (MTEPNRAQAAPASPTAELPAADE) is disordered. Mg(2+)-binding residues include glutamate 426 and glutamate 433.

Belongs to the class-II aminoacyl-tRNA synthetase family. In terms of assembly, homodimer. Mg(2+) is required as a cofactor.

It localises to the cytoplasm. It carries out the reaction tRNA(Lys) + L-lysine + ATP = L-lysyl-tRNA(Lys) + AMP + diphosphate. This Cupriavidus pinatubonensis (strain JMP 134 / LMG 1197) (Cupriavidus necator (strain JMP 134)) protein is Lysine--tRNA ligase.